A 331-amino-acid polypeptide reads, in one-letter code: Probable transaldolase (331 aa).

Lysine 142 functions as the Schiff-base intermediate with substrate in the catalytic mechanism.

The protein belongs to the transaldolase family. Type 1 subfamily. As to quaternary structure, homodimer.

Its subcellular location is the cytoplasm. It carries out the reaction D-sedoheptulose 7-phosphate + D-glyceraldehyde 3-phosphate = D-erythrose 4-phosphate + beta-D-fructose 6-phosphate. The protein operates within carbohydrate degradation; pentose phosphate pathway; D-glyceraldehyde 3-phosphate and beta-D-fructose 6-phosphate from D-ribose 5-phosphate and D-xylulose 5-phosphate (non-oxidative stage): step 2/3. Its function is as follows. Transaldolase is important for the balance of metabolites in the pentose-phosphate pathway. The polypeptide is Probable transaldolase (Drosophila melanogaster (Fruit fly)).